A 355-amino-acid chain; its full sequence is N-acetyl-gamma-glutamyl-phosphate reductase (355 aa).

The active site involves C152.

This sequence belongs to the NAGSA dehydrogenase family. Type 1 subfamily.

Its subcellular location is the cytoplasm. The catalysed reaction is N-acetyl-L-glutamate 5-semialdehyde + phosphate + NADP(+) = N-acetyl-L-glutamyl 5-phosphate + NADPH + H(+). It participates in amino-acid biosynthesis; L-arginine biosynthesis; N(2)-acetyl-L-ornithine from L-glutamate: step 3/4. Functionally, catalyzes the NADPH-dependent reduction of N-acetyl-5-glutamyl phosphate to yield N-acetyl-L-glutamate 5-semialdehyde. This chain is N-acetyl-gamma-glutamyl-phosphate reductase, found in Psychrobacter cryohalolentis (strain ATCC BAA-1226 / DSM 17306 / VKM B-2378 / K5).